The chain runs to 145 residues: Neutral phospholipase A2 paradoxin-like beta chain (145 aa).

Residues Met-1 to Leu-27 form the signal peptide. 7 disulfide bridges follow: Cys-38-Cys-98, Cys-54-Cys-144, Cys-56-Cys-72, Cys-71-Cys-125, Cys-78-Cys-118, Cys-87-Cys-111, and Cys-105-Cys-116.

This sequence belongs to the phospholipase A2 family. Group I subfamily. N49 sub-subfamily. As to quaternary structure, heterotrimer of alpha, beta, and gamma chains; non-covalently linked. As to expression, expressed by the venom gland.

The protein resides in the secreted. In terms of biological role, heterotrimer: Snake venom phospholipase A2 (PLA2) heterotrimer that acts as a potent presynaptic neurotoxin by blocking synaptic transmission and synaptic vesicle recycling. May act by binding in a calcium-dependent fashion to neurotonal pentraxin-1 (NPTX1) and neurotonal pentraxin-2 (NPTX2), but not to neuronal pentraxin receptor (NPTXR). Also binds to taipoxin-associated calcium binding protein 49 (RCN2), a protein localized in the lumen of endoplasmic reticulum. Monomer (beta chain): Snake venom phospholipase A2 homolog that is neither toxic nor enzymatically active. Does not bind calcium. The protein is Neutral phospholipase A2 paradoxin-like beta chain of Oxyuranus microlepidotus (Inland taipan).